The primary structure comprises 3072 residues: E1A-binding protein p400 (3072 aa).

Residues 1–22 (MHHGSGPQNVQHQLQRSRSFTG) show a composition bias toward polar residues. Disordered regions lie at residues 1-55 (MHHG…SPGY), 125-149 (PMSQQVQTQSPTQPSPGPGQTLQNV), and 222-250 (LSQPHAQSGGTIHHLGPQSPAAAGGTGLQ). A compositionally biased stretch (pro residues) spans 31–40 (PNLPPSPAAP). Low complexity-rich tracts occupy residues 41–53 (FAPSASPSAPQSP) and 125–136 (PMSQQVQTQSPT). Residues Ser52 and Ser134 each carry the phosphoserine modification. A phosphoserine mark is found at Ser315 and Ser321. Disordered regions lie at residues 485–519 (SLTGSLVVGPGSATEADPFKRQQVMPPTEQSKRPR), 544–601 (MPTV…ASVP), and 635–769 (APIP…SQDK). A compositionally biased stretch (low complexity) spans 556 to 569 (QATQLTGQKQSQQQ). Over residues 570–583 (YDPSTGPPVQNAAS) the composition is skewed to polar residues. Over residues 586 to 599 (TPPPQLPARLPPAS) the composition is skewed to pro residues. 3 stretches are compositionally biased toward low complexity: residues 646 to 657 (PAPSSQPAQPAL), 668 to 682 (QTSQLSSQTQTVAST), and 695 to 710 (SLPTSSSSSSLVPVSG). Polar residues-rich tracts occupy residues 724–741 (NRPSSATNKALSPITSRS) and 754–765 (SPAQNAASSQDG). Phosphoserine occurs at positions 735, 741, and 754. One can recognise an HSA domain in the interval 798 to 870 (LPKLQEAPRP…EQSRLRRIAA (73 aa)). Positions 914-928 (ESRLKGFDTSPEHSL) are enriched in basic and acidic residues. 2 disordered regions span residues 914–952 (ESRLKGFDTSPEHSLDLGISGRKRKASTSLTDDEVEDEE) and 997–1024 (FQWPQPEPDHEESSGEEDVEDCPSDRES). The residue at position 922 (Thr922) is a Phosphothreonine. Phosphoserine occurs at positions 923, 927, and 940. Phosphothreonine is present on Thr944. Positions 950-1364 (DEEETIEEEE…SVLSVLTRLQ (415 aa)) are interactions with RUVBL1 and RUVBL2. Phosphoserine is present on residues Ser1009 and Ser1010. The region spanning 1102 to 1267 (AKLYRKNLNG…WTMVHFLIPG (166 aa)) is the Helicase ATP-binding domain. 1115–1122 (DEAGLGKT) is a binding site for ATP. A DEAD box-like motif is present at residues 1218–1221 (DEMQ). At Lys1471 the chain carries N6-acetyllysine. The disordered stretch occupies residues 1473-1503 (EGRTVAFPSTHPPRMANTNTSTATPQGQVRG). Polar residues predominate over residues 1488–1499 (ANTNTSTATPQG). Ser1646 and Ser1650 each carry phosphoserine. The Helicase C-terminal domain occupies 1815–1972 (KLEALAILLQ…GNDYSMAFLT (158 aa)). 2 disordered regions span residues 2033-2062 (AQRSTEEAVPGSSSVAVSSDSDGSRYDEEP) and 2203-2227 (KERKRHKTDPSAAGRKKKQRHGEAV). The segment covering 2043–2053 (GSSSVAVSSDS) has biased composition (low complexity). 2 positions are modified to N6-acetyllysine: Lys2265 and Lys2272. One can recognise a Myb-like domain in the interval 2276 to 2345 (EPAQDSPDWL…QCRNRYENVI (70 aa)). The segment at 2440 to 2699 (KEKKALADQQ…QQQQQQQQQT (260 aa)) is interaction with ZNF42. Positions 2441 to 2534 (EKKALADQQK…PQSKGQPTMT (94 aa)) are disordered. Composition is skewed to low complexity over residues 2446-2455 (ADQQKAQQPP) and 2463-2478 (QQQQQQQQQQQQQQQQ). Pro residues predominate over residues 2479 to 2493 (QPPPPPQQPPPPVPQ). The span at 2494–2526 (PQAASSQTPAGQPAVQPQPQPQVQTQPQPVQPQ) shows a compositional bias: low complexity. Ser2614 bears the Phosphoserine mark. Disordered stretches follow at residues 2734–2790 (QKMQ…TGTT) and 3028–3072 (ASLQ…PPCQ). The segment covering 2739 to 2754 (PPQPPPPQAQPGPPQQ) has biased composition (pro residues). Residues 2755–2775 (PAQVQVQTPQPPQQQQSPQLT) are compositionally biased toward low complexity. Positions 3042–3053 (PASSDSPSQQPK) are enriched in polar residues.

The protein belongs to the SNF2/RAD54 helicase family. SWR1 subfamily. As to quaternary structure, component of the NuA4 histone acetyltransferase complex which contains the catalytic subunit KAT5/TIP60 and the subunits EP400, TRRAP/PAF400, BRD8/SMAP, EPC1, DMAP1/DNMAP1, RUVBL1/TIP49, RUVBL2, ING3, actin, ACTL6A/BAF53A, MORF4L1/MRG15, MORF4L2/MRGX, MRGBP, YEATS4/GAS41, VPS72/YL1 and MEAF6. May also participate in the formation of NuA4 related complexes which lack the KAT5/TIP60 catalytic subunit, but which include the SWI/SNF related protein SRCAP. The NuA4 complex interacts with MYC. EP400 interacts with TRRAP, RUVBL1 and RUVBL2. Component of a SWR1-like complex. Interacts with ZNF42. Interacts with PHF5A. Expressed in brain, thymus, lung, liver, spleen, kidney, colon and bone marrow.

The protein localises to the nucleus. In terms of biological role, component of the NuA4 histone acetyltransferase complex which is involved in transcriptional activation of select genes principally by acetylation of nucleosomal histones H4 and H2A. This modification may both alter nucleosome - DNA interactions and promote interaction of the modified histones with other proteins which positively regulate transcription. May be required for transcriptional activation of E2F1 and MYC target genes during cellular proliferation. The NuA4 complex ATPase and helicase activities seem to be, at least in part, contributed by the association of RUVBL1 and RUVBL2 with EP400. Component of a SWR1-like complex that specifically mediates the removal of histone H2A.Z/H2AZ1 from the nucleosome. Regulates transcriptional activity of ZNF42. This is E1A-binding protein p400 (Ep400) from Mus musculus (Mouse).